The following is an 84-amino-acid chain: Small ribosomal subunit protein uS17 (84 aa).

The protein belongs to the universal ribosomal protein uS17 family. In terms of assembly, part of the 30S ribosomal subunit.

In terms of biological role, one of the primary rRNA binding proteins, it binds specifically to the 5'-end of 16S ribosomal RNA. This is Small ribosomal subunit protein uS17 from Aliivibrio salmonicida (strain LFI1238) (Vibrio salmonicida (strain LFI1238)).